Consider the following 279-residue polypeptide: Shikimate dehydrogenase (NADP(+)) (279 aa).

Shikimate is bound by residues 17–19 and T64; that span reads SLS. K68 serves as the catalytic Proton acceptor. D80 is a binding site for NADP(+). Residues N89 and D105 each contribute to the shikimate site. NADP(+) is bound by residues 129 to 133, 153 to 158, and L221; these read GAGGS and NRTAKK. Y223 lines the shikimate pocket. NADP(+) is bound at residue G245.

It belongs to the shikimate dehydrogenase family. Homodimer.

It carries out the reaction shikimate + NADP(+) = 3-dehydroshikimate + NADPH + H(+). The protein operates within metabolic intermediate biosynthesis; chorismate biosynthesis; chorismate from D-erythrose 4-phosphate and phosphoenolpyruvate: step 4/7. Its function is as follows. Involved in the biosynthesis of the chorismate, which leads to the biosynthesis of aromatic amino acids. Catalyzes the reversible NADPH linked reduction of 3-dehydroshikimate (DHSA) to yield shikimate (SA). The sequence is that of Shikimate dehydrogenase (NADP(+)) from Idiomarina loihiensis (strain ATCC BAA-735 / DSM 15497 / L2-TR).